We begin with the raw amino-acid sequence, 542 residues long: Aminotriazole resistance protein (542 aa).

Over 1–108 (MGNQSLVVLT…SFGSEGNSKS (108 aa)) the chain is Cytoplasmic. A helical transmembrane segment spans residues 109-129 (WLMASFPLVSGSFILISGRLG). Over 130–136 (DIYGLKK) the chain is Extracellular. The chain crosses the membrane as a helical span at residues 137–157 (MLLVGYVLVIIWSLICGITKY). Over 158-172 (SGSDTFFIISRAFQG) the chain is Cytoplasmic. A helical transmembrane segment spans residues 173-193 (LGIAFVLPNVLGIIGNIYVGG). The Extracellular portion of the chain corresponds to 194-198 (TFRKN). Residues 199–219 (IVISFVGAMAPIGATLGCLFA) traverse the membrane as a helical segment. Topologically, residues 220-231 (GLIGTEDPKQWP) are cytoplasmic. Residues 232 to 252 (WAFYAYSIAAFINFVLSIYAI) traverse the membrane as a helical segment. Topologically, residues 253 to 262 (PSTIPTNIHH) are extracellular. The helical transmembrane segment at 263–283 (FSMDWIGSVLGVIGLILLNFV) threads the bilayer. Over 284–295 (WNQAPISGWNQA) the chain is Cytoplasmic. Residues 296-316 (YIIVILIISVIFLVVFIIYEI) traverse the membrane as a helical segment. Residues 317-333 (RFAKTPLLPRAVIKDRH) are Extracellular-facing. A helical transmembrane segment spans residues 334–354 (MIQIMLALFFGWGSFGIFTFY). At 355–371 (YFQFQLNIRQYTALWAG) the chain is on the cytoplasmic side. A helical transmembrane segment spans residues 372–392 (GTYFMFLIWGIIAALLVGFTI). Residues 393–399 (KNVSPSV) are Extracellular-facing. The chain crosses the membrane as a helical span at residues 400–420 (FLFFSMVAFNVGSIMASVTPV). The Cytoplasmic portion of the chain corresponds to 421-429 (HETYFRTQL). Residues 430-450 (GTMIILSFGMDLSFPASSIIF) traverse the membrane as a helical segment. Residues 451 to 505 (SDNLPMEYQGMAGSLVNTVVNYSMSLCLGMGATVETQVNSDGKHLLKGYRGAQYL) are Extracellular-facing. Asn-471 is a glycosylation site (N-linked (GlcNAc...) asparagine). A helical transmembrane segment spans residues 506 to 526 (GIGLASLACMISGLYMVESFI). The Cytoplasmic segment spans residues 527–542 (KGRRARAAAEYDCTVA).

The protein belongs to the major facilitator superfamily.

The protein resides in the membrane. In terms of biological role, putative component of the machinery responsible for pumping aminotriazole (and possibly other toxic compounds) out of the cell. Probable ATP-dependent export permease. Appears to confer resistance only to aminotriazole. This chain is Aminotriazole resistance protein (ATR1), found in Saccharomyces cerevisiae (strain ATCC 204508 / S288c) (Baker's yeast).